The sequence spans 472 residues: Protein hedgehog (472 aa).

Cys-84 is lipidated: N-palmitoyl cysteine. Ca(2+) contacts are provided by Glu-149, Asp-154, Glu-185, Asp-188, and Asp-190. Gly-256 carries the Cholesterol glycine ester lipid modification.

The protein belongs to the hedgehog family. As to quaternary structure, interacts with shf. The C-terminal part of the hedgehog protein precursor displays an autoproteolysis activity that results in the cleavage of the full-length protein into two parts (N-product and C-product). In addition, the C-terminal part displays a cholesterol transferase activity that results by the covalent attachment of a cholesterol moiety to the C-terminal of the newly generated N-product. The N-product is the active species in both local and long-range signaling, whereas the C-product has no signaling activity. In terms of processing, cholesterylation is required for N-product targeting to lipid rafts and multimerization. Post-translationally, N-palmitoylation by Rasp of the hedgehog N-product, within the secretory pathway, is required for the embryonic and larval patterning activities of the hedgehog signal.

It localises to the nucleus. The protein resides in the cytoplasm. Its subcellular location is the cell membrane. The enzyme catalyses glycyl-L-cysteinyl-[protein] + cholesterol + H(+) = [protein]-C-terminal glycyl cholesterol ester + N-terminal L-cysteinyl-[protein]. In terms of biological role, the C-terminal part of the hedgehog protein precursor displays an autoproteolysis activity that results in the cleavage of the full-length protein into two parts (N-product and C-product). In addition, the C-terminal part displays a cholesterol transferase activity that results by the covalent attachment of a cholesterol moiety to the C-terminal of the newly generated N-product. Once cleaved, the C-product has no signaling activity and diffuses from the cell. Its function is as follows. The dually lipidated hedgehog protein N-product is a morphogen which is essential for a variety of patterning events during development. Establishes the anterior-posterior axis of the embryonic segments and patterns the larval imaginal disks. Binds to the patched (ptc) receptor, which functions in association with smoothened (smo), to activate the transcription of target genes wingless (wg), decapentaplegic (dpp) and ptc. In the absence of hh, ptc represses the constitutive signaling activity of smo through fused (fu). Essential component of a signaling pathway which regulates the Duox-dependent gut immune response to bacterial uracil; required to activate Cad99C-dependent endosome formation, norpA-dependent Ca2+ mobilization and p38 MAPK, which are essential steps in the Duox-dependent production of reactive oxygen species (ROS) in response to intestinal bacterial infection. During photoreceptor differentiation, it up-regulates transcription of Ubr3, which in turn promotes the hh-signaling pathway by mediating the ubiquitination and degradation of cos. The chain is Protein hedgehog from Drosophila ananassae (Fruit fly).